The primary structure comprises 259 residues: Ribonuclease HII (259 aa).

The RNase H type-2 domain occupies 70-258; that stretch reads TLIAGIDEVG…VKSLVLGKKE (189 aa). Asp76, Glu77, and Asp168 together coordinate a divalent metal cation.

It belongs to the RNase HII family. It depends on Mn(2+) as a cofactor. The cofactor is Mg(2+).

The protein resides in the cytoplasm. The catalysed reaction is Endonucleolytic cleavage to 5'-phosphomonoester.. Its function is as follows. Endonuclease that specifically degrades the RNA of RNA-DNA hybrids. The sequence is that of Ribonuclease HII from Streptococcus pneumoniae serotype 19F (strain G54).